Reading from the N-terminus, the 381-residue chain is Cyclin-dependent kinase inhibitor CIP1 (381 aa).

The segment covering 1–11 (MLLERLHKRLH) has biased composition (basic residues). A disordered region spans residues 1 to 30 (MLLERLHKRLHAGSSRRSQENKDKNCKPED). Basic and acidic residues predominate over residues 17–30 (RSQENKDKNCKPED). Phosphothreonine occurs at positions 65, 69, and 73.

In terms of assembly, interact with the CDC28/CLN2 complex. Post-translationally, phosphorylated during S phase in a CDC28-dependent manner. Phosphorylated at Thr-65 and Thr-73 by HOG1 under osmotic stress. The phosphorylations of Thr-65 and Thr-73 are necessary for CIP1-induced growth inhibition.

It is found in the cytoplasm. The protein resides in the nucleus. Functionally, acts as an inhibitor of the CDC28/CLN2 cyclin-dependent kinase complex. Stabilizes the CDC28 inhibitor SIC1. Negatively regulates the G1/S phase transition. Contributes to osmostress-induced transitory G1 delay. The sequence is that of Cyclin-dependent kinase inhibitor CIP1 from Saccharomyces cerevisiae (strain ATCC 204508 / S288c) (Baker's yeast).